Here is a 494-residue protein sequence, read N- to C-terminus: Probable serine/threonine-protein kinase BSK3 (494 aa).

Residue G2 is the site of N-myristoyl glycine attachment. In terms of domain architecture, Protein kinase spans 61–316 (ENIVSEHGEK…SLVQALAPLQ (256 aa)). ATP-binding positions include 67 to 75 (HGEKAPNVV) and K89. The Proton acceptor role is filled by D183. Phosphoserine is present on residues S213 and S215. A TPR repeat occupies 423 to 456 (PTIYARRCLSYLMNDKAEQALSDAMQALVISPTW).

Interacts with BRI1 and BSL1. In terms of processing, phosphorylated at Ser-213 and Ser-215 by BRI1. Phosphorylation at Ser-215 is required for its function in the regulation of brassinosteroid signaling. Phosphorylation by BRI1 disrupts the interaction between its TPR and kinase domains, thereby increasing the binding between its kinase domain and BSL1.

The protein localises to the cell membrane. The enzyme catalyses L-seryl-[protein] + ATP = O-phospho-L-seryl-[protein] + ADP + H(+). It catalyses the reaction L-threonyl-[protein] + ATP = O-phospho-L-threonyl-[protein] + ADP + H(+). Its function is as follows. Probable serine/threonine kinase that acts as a positive regulator of brassinosteroid (BR) signaling downstream of BRI1. The chain is Probable serine/threonine-protein kinase BSK3 from Oryza sativa subsp. japonica (Rice).